A 220-amino-acid chain; its full sequence is Putative amino-acid transporter YisU (220 aa).

6 helical membrane passes run 15–35 (FFSM…ILPL), 67–87 (TLLI…LPVF), 89–109 (TVMM…TWNI), 128–148 (AFAA…IGVI), 161–181 (WLFM…LAIA), and 195–215 (MLIV…YFGV).

The protein belongs to the LysE/ArgO transporter (TC 2.A.75) family.

The protein resides in the cell membrane. This Bacillus subtilis (strain 168) protein is Putative amino-acid transporter YisU (yisU).